The chain runs to 214 residues: YINYKNMSHQHLLTLFNLLPVGANISTWWNFGSMLLSCLMIQIATGFFLAIHYTANINMAFSSIVHISRDVPYGWIMQNTHAIGASLFFICIYIHIARGIYYGSYLNKEVWLSGTTLLIILMATAFFGYVLPWGQMSFWAATVITNLLTAIPYLGTTLTTWLWGGFAINDPTLTRFFALHFILPFAIISLSSLHILLLHNEGSNNPLGTNSDID.

4 consecutive transmembrane segments (helical) span residues 31–51 (FGSMLLSCLMIQIATGFFLAI), 75–96 (WIMQNTHAIGASLFFICIYIHI), 111–131 (WLSGTTLLIILMATAFFGYVL), and 176–196 (FFALHFILPFAIISLSSLHIL). Heme b contacts are provided by H81 and H95. The heme b site is built by H180 and H194. H199 serves as a coordination point for a ubiquinone.

Belongs to the cytochrome b family. In terms of assembly, the cytochrome bc1 complex contains 3 respiratory subunits (MT-CYB, CYC1 and UQCRFS1), 2 core proteins (UQCRC1 and UQCRC2) and probably 6 low-molecular weight proteins. Heme b serves as cofactor.

The protein resides in the mitochondrion inner membrane. Component of the ubiquinol-cytochrome c reductase complex (complex III or cytochrome b-c1 complex) that is part of the mitochondrial respiratory chain. The b-c1 complex mediates electron transfer from ubiquinol to cytochrome c. Contributes to the generation of a proton gradient across the mitochondrial membrane that is then used for ATP synthesis. The polypeptide is Cytochrome b (MT-CYB) (Crotalus atrox (Western diamondback rattlesnake)).